Consider the following 234-residue polypeptide: Ponticulin-like protein J (234 aa).

An N-terminal signal peptide occupies residues 1 to 20 (MRLLNNLILMVVLFVAVSNA). N-linked (GlcNAc...) asparagine glycans are attached at residues Asn19, Asn143, Asn166, and Asn206. A disordered region spans residues 115–213 (TIKCGTLPPD…SDNETAEGNN (99 aa)). Residues 154-195 (KSTPKSPSTPKTNNSNEDSDLTTSSSDSSSSTKSSPKSKSST) are compositionally biased toward low complexity. The GPI-like-anchor amidated asparagine moiety is linked to residue Asn212. The N-linked (GlcNAc...) asparagine glycan is linked to Asn213. Residues 213-234 (NASSNIATFSLVIISLLVASLF) constitute a propeptide, removed in mature form.

The protein belongs to the ponticulin family. In terms of processing, the GPI-like-anchor contains a phosphoceramide group, rather than a phosphatidyl group.

The protein resides in the cell membrane. Functionally, binds F-actin and nucleates actin assembly. The sequence is that of Ponticulin-like protein J (ponJ) from Dictyostelium discoideum (Social amoeba).